The sequence spans 138 residues: Cell division protein SepF (138 aa).

Residues 1 to 59 are disordered; the sequence is MNNKFKDFFGFGDNDSYEERDAYEEHYDEQEEMQNSNRPTNSRDSNVVSIKAGQAGSGP. The segment covering 33 to 48 has biased composition (polar residues); sequence MQNSNRPTNSRDSNVV.

Belongs to the SepF family. In terms of assembly, homodimer. Interacts with FtsZ.

Its subcellular location is the cytoplasm. In terms of biological role, cell division protein that is part of the divisome complex and is recruited early to the Z-ring. Probably stimulates Z-ring formation, perhaps through the cross-linking of FtsZ protofilaments. Its function overlaps with FtsA. This chain is Cell division protein SepF, found in Lactobacillus delbrueckii subsp. bulgaricus (strain ATCC 11842 / DSM 20081 / BCRC 10696 / JCM 1002 / NBRC 13953 / NCIMB 11778 / NCTC 12712 / WDCM 00102 / Lb 14).